A 646-amino-acid polypeptide reads, in one-letter code: Cartilage acidic protein 1 (646 aa).

Residues 1 to 28 (MAPSADPGMVRMALLLLPPLWLLPLTGG) form the signal peptide. The stretch at 47–89 (DYDSNPTQLNYGVAVTDVDHDGDFEIVVAGYTGPNLVLKYNRA) is one FG-GAP 1; atypical repeat. An FG-GAP 2; atypical repeat occupies 106 to 148 (YALRDRQGNAIGVTACDIDGDGREEIYFLNTNNAFSGVATYTD). One copy of the FG-GAP 3; atypical repeat lies at 284 to 334 (AGVDDPHQHGRGVALADFNRDGKVDIVYGNWNGPHRLYLQMSAHGKVRFRD). The stretch at 396–438 (GDALEPEGRGTGGVVTDFDGDGMLDLILSHGESMAQPLSVFRG) is one FG-GAP 4; atypical repeat. The 47-residue stretch at 560-606 (DTNECIQFPFVCPRDKPVCVNTYGSYRCRTNKRCNRGYEPNEDGTAC) folds into the EGF-like domain. Disulfide bonds link Cys564-Cys578, Cys571-Cys587, and Cys593-Cys606.

Its subcellular location is the secreted. The protein localises to the extracellular space. It localises to the extracellular matrix. This Mus musculus (Mouse) protein is Cartilage acidic protein 1 (Crtac1).